Here is a 271-residue protein sequence, read N- to C-terminus: High mobility group protein homolog TDP-1 (271 aa).

The DEK-C domain maps to glycine 8–glutamine 63. A disordered region spans residues leucine 75 to proline 118. Over residues serine 101–aspartate 116 the composition is skewed to basic and acidic residues. DNA-binding regions (HMG box) lie at residues proline 118–lysine 186 and proline 206–proline 270.

It is found in the nucleus. Functionally, unknown. May play a role in transcription and/or DNA replication. It is not known whether this protein is DNA sequence binding-specific or not. The polypeptide is High mobility group protein homolog TDP-1 (Trypanosoma brucei rhodesiense).